Reading from the N-terminus, the 33-residue chain is Cytochrome b6-f complex subunit 7 (33 aa).

Residues 5-25 traverse the membrane as a helical segment; sequence IFNTAVITFTLVLVGLGAGYL.

It belongs to the PetM family. As to quaternary structure, the 4 large subunits of the cytochrome b6-f complex are cytochrome b6, subunit IV (17 kDa polypeptide, PetD), cytochrome f and the Rieske protein, while the 4 small subunits are PetG, PetL, PetM and PetN. The complex functions as a dimer.

The protein localises to the cellular thylakoid membrane. Its function is as follows. Component of the cytochrome b6-f complex, which mediates electron transfer between photosystem II (PSII) and photosystem I (PSI), cyclic electron flow around PSI, and state transitions. The polypeptide is Cytochrome b6-f complex subunit 7 (Thermosynechococcus vestitus (strain NIES-2133 / IAM M-273 / BP-1)).